We begin with the raw amino-acid sequence, 414 residues long: Esterase FrsA (414 aa).

It belongs to the FrsA family.

It catalyses the reaction a carboxylic ester + H2O = an alcohol + a carboxylate + H(+). In terms of biological role, catalyzes the hydrolysis of esters. The polypeptide is Esterase FrsA (Shigella boydii serotype 4 (strain Sb227)).